The chain runs to 145 residues: Small ribosomal subunit protein uS9 (145 aa).

A compositionally biased stretch (polar residues) spans 1–13; sequence MATDQHSNKSNVS. Residues 1–24 form a disordered region; the sequence is MATDQHSNKSNVSAARKPLSPSPT.

It belongs to the universal ribosomal protein uS9 family.

The protein resides in the cytoplasm. This chain is Small ribosomal subunit protein uS9 (RPS16), found in Lupinus polyphyllus (Large-leaved lupine).